Reading from the N-terminus, the 59-residue chain is Large ribosomal subunit protein bL32 (59 aa).

The segment at 1–59 (MAVQQNKKSPSKRGMHRSHDALTAPALSVDSTTGEVHRPHHISPNGMYRGRKVVKVKGE) is disordered. Positions 49-59 (RGRKVVKVKGE) are enriched in basic residues.

This sequence belongs to the bacterial ribosomal protein bL32 family.

The polypeptide is Large ribosomal subunit protein bL32 (rpmF) (Neisseria meningitidis serogroup A / serotype 4A (strain DSM 15465 / Z2491)).